Here is a 416-residue protein sequence, read N- to C-terminus: UDP-N-acetylglucosamine 1-carboxyvinyltransferase (416 aa).

22 to 23 contacts phosphoenolpyruvate; that stretch reads KN. R91 is a binding site for UDP-N-acetyl-alpha-D-glucosamine. C115 functions as the Proton donor in the catalytic mechanism. At C115 the chain carries 2-(S-cysteinyl)pyruvic acid O-phosphothioketal. D304 and I326 together coordinate UDP-N-acetyl-alpha-D-glucosamine.

This sequence belongs to the EPSP synthase family. MurA subfamily.

It is found in the cytoplasm. It carries out the reaction phosphoenolpyruvate + UDP-N-acetyl-alpha-D-glucosamine = UDP-N-acetyl-3-O-(1-carboxyvinyl)-alpha-D-glucosamine + phosphate. Its pathway is cell wall biogenesis; peptidoglycan biosynthesis. Functionally, cell wall formation. Adds enolpyruvyl to UDP-N-acetylglucosamine. This chain is UDP-N-acetylglucosamine 1-carboxyvinyltransferase, found in Thermodesulfovibrio yellowstonii (strain ATCC 51303 / DSM 11347 / YP87).